The chain runs to 587 residues: Kelch-like protein 3 (587 aa).

S10 is modified (phosphoserine). In terms of domain architecture, BTB spans C50–E117. Residues C152–E254 enclose the BACK domain. The residue at position 295 (T295) is a Phosphothreonine. Kelch repeat units follow at residues V302–G347, H348–D394, L396–G441, K442–G490, Q491–G537, and L539–K585. Residue T375 is modified to Phosphothreonine. A Phosphoserine modification is found at S376. S433 is subject to Phosphoserine; by PKA and PKC.

Belongs to the KLHL3 family. As to quaternary structure, homodimer. Component of the BCR(KLHL3) E3 ubiquitin ligase complex, at least composed of CUL3 and KLHL3 and RBX1. Interacts with CLDN8. In terms of processing, phosphorylation at Ser-433 by PKA or PKC decreases the interaction with WNK1 and WNK4, leading to inhibit their degradation by the BCR(KLHL3) complex. Phosphorylated at Ser-433 by PKC in response to angiotensin II signaling, decreasing ability to promote degradation of WNK1 and WNK4, leading to activation of Na-Cl cotransporter SLC12A3/NCC. Phosphorylation at Ser-433 is increased by insulin. Dephosphorylated at Ser-433 by calcineurin PPP3CA, promoting degradation of WNK1 and WNK4. In terms of tissue distribution, widely expressed.

It localises to the cytoplasm. The protein resides in the cytosol. Its subcellular location is the cytoskeleton. It functions in the pathway protein modification; protein ubiquitination. Functionally, substrate-specific adapter of a BCR (BTB-CUL3-RBX1) E3 ubiquitin ligase complex that acts as a regulator of ion transport in the distal nephron. The BCR(KLHL3) complex acts by mediating ubiquitination and degradation of WNK1 and WNK4, two activators of Na-Cl cotransporter SLC12A3/NCC in distal convoluted tubule cells of kidney, thereby regulating NaCl reabsorption. The BCR(KLHL3) complex also mediates ubiquitination and degradation of WNK3. The BCR(KLHL3) complex also mediates ubiquitination of CLDN8, a tight-junction protein required for paracellular chloride transport in the kidney, leading to its degradation. The chain is Kelch-like protein 3 from Homo sapiens (Human).